The primary structure comprises 326 residues: MNTTPGTVGSDPVILATAGYDHTVRFWQAHSGICTRTVQHQDSQVNALEITPDRSMIAAAGYQHIRMYDLNSNNPNPIISYDGVSKNIASVGFHEDGRWMYTGGEDCTARIWDLRSRNLQCQRIFQVNAPINCVCLHPNQAELIVGDQSGAIHIWDLKTDHNEQLIPEPESSITSAHIDPDASYMAAVNSAGNCYVWNLTGGIGDDVTQLIPKTKIPAHTRYALQCRFSPDSTLLATCSADQTCKIWRTSNFSLMTELSIKSSNPGESSRGWMWGCAFSGDSQYIVTASSDNLARLWCVETGEIKREYGGHQKAVVCLAFNDSVLG.

M1 bears the N-acetylmethionine mark. WD repeat units lie at residues 1-37 (MNTT…CTRT), 40-80 (HQDS…PIIS), 83-122 (GVSK…LQCQ), 126-165 (QVNA…NEQL), and 168-207 (EPES…GDDV). The residue at position 51 (T51) is a Phosphothreonine. K86 is covalently cross-linked (Glycyl lysine isopeptide (Lys-Gly) (interchain with G-Cter in SUMO3)). Residues K215, K245, and K261 each participate in a glycyl lysine isopeptide (Lys-Gly) (interchain with G-Cter in SUMO3) cross-link. A WD 6 repeat occupies 218 to 257 (AHTRYALQCRFSPDSTLLATCSADQTCKIWRTSNFSLMTE). One copy of the WD 7 repeat lies at 268-309 (SSRGWMWGCAFSGDSQYIVTASSDNLARLWCVETGEIKREYG). K305 participates in a covalent cross-link: Glycyl lysine isopeptide (Lys-Gly) (interchain with G-Cter in SUMO3); alternate. Glycyl lysine isopeptide (Lys-Gly) (interchain with G-Cter in ubiquitin); alternate cross-links involve residues K305 and K313. K313 participates in a covalent cross-link: Glycyl lysine isopeptide (Lys-Gly) (interchain with G-Cter in SUMO1); alternate.

Belongs to the WD repeat LST8 family. Part of the mechanistic target of rapamycin complex 1 (mTORC1) which contains MTOR, MLST8 and RPTOR. mTORC1 associates with AKT1S1/PRAS40, which inhibits its activity. mTORC1 binds to and is inhibited by FKBP12-rapamycin. Within mTORC1, interacts directly with MTOR and RPTOR. Component of the mechanistic target of rapamycin complex 2 (mTORC2), consisting in two heterotretramers composed of MTOR, MLST8, RICTOR and MAPKAP1/SIN1. Contrary to mTORC1, mTORC2 does not bind to and is not sensitive to FKBP12-rapamycin. mTORC1 and mTORC2 associate with DEPTOR, which regulates their activity. Interacts with RHEB. Interacts with MEAK7. Interacts with SIK3. Interacts with SLC38A7; this interaction promotes the recruitment of mTORC1 to the lysosome and its subsequent activation. Post-translationally, phosphorylation at Thr-51 by CDK1 promotes ubiquitination by the SCF(FBXW7) complex, followed by degradation. Ubiquitination by the SCF(FBXW7) and SCF(FBXW11) complexes following phosphorylation at Thr-51 by CDK1, leads to its degradation by the proteasome. Ubiquitination at Lys-305 and Lys-313 by TRAF2 via 'Lys-63'-linked polyubiquitin chains inhibits formation of the mTORC2 complex, while promoting formation of the mTORC1 complex: ubiquitination disrupts the interaction between MLST8 and MAPKAP1/SIN1 to favor mTORC1 assembly. Deubiquitination at Lys-305 and Lys-313 by OTUD7B promotes MLST8 interaction with MAPKAP1/SIN1, facilitating mTORC2 assembly. In terms of processing, sumoylation with SUMO1, SUMO2 and SUMO3 promotes assembly of both mTORC1 and mTORC2 complexes.

The protein localises to the lysosome membrane. The protein resides in the cytoplasm. Functionally, subunit of both mTORC1 and mTORC2, which regulates cell growth and survival in response to nutrient and hormonal signals. mTORC1 is activated in response to growth factors or amino acids. In response to nutrients, mTORC1 is recruited to the lysosome membrane and promotes protein, lipid and nucleotide synthesis by phosphorylating several substrates, such as ribosomal protein S6 kinase (RPS6KB1 and RPS6KB2) and EIF4EBP1 (4E-BP1). In the same time, it inhibits catabolic pathways by phosphorylating the autophagy initiation components ULK1 and ATG13, as well as transcription factor TFEB, a master regulators of lysosomal biogenesis and autophagy. The mTORC1 complex is inhibited in response to starvation and amino acid depletion. Within mTORC1, MLST8 interacts directly with MTOR and enhances its kinase activity. In nutrient-poor conditions, stabilizes the MTOR-RPTOR interaction and favors RPTOR-mediated inhibition of MTOR activity. As part of the mTORC2 complex, transduces signals from growth factors to pathways involved in proliferation, cytoskeletal organization, lipogenesis and anabolic output. mTORC2 is also activated by growth factors, but seems to be nutrient-insensitive. In response to growth factors, mTORC2 phosphorylates and activates AGC protein kinase family members, including AKT (AKT1, AKT2 and AKT3), PKC (PRKCA, PRKCB and PRKCE) and SGK1. mTORC2 functions upstream of Rho GTPases to regulate the actin cytoskeleton, probably by activating one or more Rho-type guanine nucleotide exchange factors. mTORC2 promotes the serum-induced formation of stress-fibers or F-actin. mTORC2 plays a critical role in AKT1 activation by mediating phosphorylation of different sites depending on the context, such as 'Thr-450', 'Ser-473', 'Ser-477' or 'Thr-479', facilitating the phosphorylation of the activation loop of AKT1 on 'Thr-308' by PDPK1/PDK1 which is a prerequisite for full activation. mTORC2 regulates the phosphorylation of SGK1 at 'Ser-422'. mTORC2 also modulates the phosphorylation of PRKCA on 'Ser-657'. Within mTORC2, MLST8 acts as a bridge between MAPKAP1/SIN1 and MTOR. The polypeptide is Target of rapamycin complex subunit LST8 (Mus musculus (Mouse)).